The primary structure comprises 214 residues: Vascular endothelial growth factor A (214 aa).

A signal peptide spans 1–26; the sequence is MNFLLSWVHWSLALLLYLHHAKWSQA. Cystine bridges form between C51–C93, C82–C127, and C86–C129. An N-linked (GlcNAc...) asparagine glycan is attached at N100. Positions 131–142 are enriched in basic and acidic residues; sequence PKKDRARQEKKS. A disordered region spans residues 131-162; that stretch reads PKKDRARQEKKSIRGKGKGQKRKRKKSRYKPW. A compositionally biased stretch (basic residues) spans 143 to 159; it reads IRGKGKGQKRKRKKSRY.

This sequence belongs to the PDGF/VEGF growth factor family. Homodimer; disulfide-linked. Also found as heterodimer with PGF. Interacts with NRP1. Interacts with BSG. Interacts with CD82; this interaction inhibits VEGFA-mediated signaling pathway.

Its subcellular location is the secreted. Growth factor active in angiogenesis, vasculogenesis and endothelial cell growth. Induces endothelial cell proliferation, promotes cell migration, inhibits apoptosis and induces permeabilization of blood vessels. Binds to the FLT1/VEGFR1 and KDR/VEGFR2 receptors, heparan sulfate and heparin. Binding to NRP1 receptor initiates a signaling pathway needed for motor neuron axon guidance and cell body migration, including for the caudal migration of facial motor neurons from rhombomere 4 to rhombomere 6 during embryonic development. Also binds the DEAR/FBXW7-AS1 receptor. This chain is Vascular endothelial growth factor A (VEGFA), found in Canis lupus familiaris (Dog).